Consider the following 524-residue polypeptide: NAD(P)H-quinone oxidoreductase chain 4, chloroplastic (524 aa).

Helical transmembrane passes span 4 to 24 (YPWL…IPLI), 31 to 51 (LIRW…TYVF), 87 to 107 (IALV…AWPV), 113 to 133 (LFYF…LAQD), 134 to 154 (LLLF…LLSM), 167 to 187 (FILY…TISL), 211 to 231 (ILVY…FPFH), 242 to 262 (HYST…YGFI), 275 to 295 (IFAP…ALVS), 308 to 328 (SSVS…DLGL), 330 to 350 (GAIL…FLAG), 386 to 406 (LALP…GIVA), 417 to 437 (IITC…LSMV), and 465 to 485 (VFII…PDLT).

The protein belongs to the complex I subunit 4 family.

The protein localises to the plastid. Its subcellular location is the chloroplast thylakoid membrane. The catalysed reaction is a plastoquinone + NADH + (n+1) H(+)(in) = a plastoquinol + NAD(+) + n H(+)(out). It carries out the reaction a plastoquinone + NADPH + (n+1) H(+)(in) = a plastoquinol + NADP(+) + n H(+)(out). This is NAD(P)H-quinone oxidoreductase chain 4, chloroplastic from Staurastrum punctulatum (Green alga).